Here is a 470-residue protein sequence, read N- to C-terminus: 3-isopropylmalate dehydratase large subunit (470 aa).

3 residues coordinate [4Fe-4S] cluster: Cys-348, Cys-409, and Cys-412.

The protein belongs to the aconitase/IPM isomerase family. LeuC type 1 subfamily. In terms of assembly, heterodimer of LeuC and LeuD. [4Fe-4S] cluster is required as a cofactor.

The enzyme catalyses (2R,3S)-3-isopropylmalate = (2S)-2-isopropylmalate. Its pathway is amino-acid biosynthesis; L-leucine biosynthesis; L-leucine from 3-methyl-2-oxobutanoate: step 2/4. Catalyzes the isomerization between 2-isopropylmalate and 3-isopropylmalate, via the formation of 2-isopropylmaleate. In Acidithiobacillus ferrooxidans (strain ATCC 23270 / DSM 14882 / CIP 104768 / NCIMB 8455) (Ferrobacillus ferrooxidans (strain ATCC 23270)), this protein is 3-isopropylmalate dehydratase large subunit.